Here is a 433-residue protein sequence, read N- to C-terminus: Divergent protein kinase domain 2B (433 aa).

The first 31 residues, 1–31 (MEPQLGPEAAALRPGWLALLLWVSALSCSFS), serve as a signal peptide directing secretion. Asn100 carries N-linked (GlcNAc...) asparagine glycosylation.

Belongs to the DIPK family.

The protein localises to the secreted. The chain is Divergent protein kinase domain 2B from Homo sapiens (Human).